Reading from the N-terminus, the 205-residue chain is UPF0301 protein AZC_0488 (205 aa).

Belongs to the UPF0301 (AlgH) family.

This chain is UPF0301 protein AZC_0488, found in Azorhizobium caulinodans (strain ATCC 43989 / DSM 5975 / JCM 20966 / LMG 6465 / NBRC 14845 / NCIMB 13405 / ORS 571).